The sequence spans 426 residues: D-tagatose-1,6-bisphosphate aldolase subunit KbaZ (426 aa).

It belongs to the GatZ/KbaZ family. KbaZ subfamily. In terms of assembly, forms a complex with KbaY.

The protein operates within carbohydrate metabolism; D-tagatose 6-phosphate degradation; D-glyceraldehyde 3-phosphate and glycerone phosphate from D-tagatose 6-phosphate: step 2/2. In terms of biological role, component of the tagatose-1,6-bisphosphate aldolase KbaYZ that is required for full activity and stability of the Y subunit. Could have a chaperone-like function for the proper and stable folding of KbaY. When expressed alone, KbaZ does not show any aldolase activity. This Escherichia coli (strain 55989 / EAEC) protein is D-tagatose-1,6-bisphosphate aldolase subunit KbaZ.